Here is a 600-residue protein sequence, read N- to C-terminus: Aspartate--tRNA(Asp/Asn) ligase (600 aa).

E174 lines the L-aspartate pocket. The interval 198-201 (QLFK) is aspartate. R220 contacts L-aspartate. Residues 220–222 (RDE) and Q229 contribute to the ATP site. H457 contacts L-aspartate. ATP is bound at residue E491. Position 498 (R498) interacts with L-aspartate. 543–546 (GLDR) contacts ATP.

This sequence belongs to the class-II aminoacyl-tRNA synthetase family. Type 1 subfamily. Homodimer.

Its subcellular location is the cytoplasm. The enzyme catalyses tRNA(Asx) + L-aspartate + ATP = L-aspartyl-tRNA(Asx) + AMP + diphosphate. In terms of biological role, aspartyl-tRNA synthetase with relaxed tRNA specificity since it is able to aspartylate not only its cognate tRNA(Asp) but also tRNA(Asn). Reaction proceeds in two steps: L-aspartate is first activated by ATP to form Asp-AMP and then transferred to the acceptor end of tRNA(Asp/Asn). The sequence is that of Aspartate--tRNA(Asp/Asn) ligase from Burkholderia mallei (strain NCTC 10247).